The chain runs to 216 residues: Probable GTP-binding protein EngB (216 aa).

The EngB-type G domain occupies 37 to 214 (QGLEVAFAGR…RAAIIKLVAE (178 aa)). GTP is bound by residues 45–52 (GRSNVGKS), 72–76 (GRTQE), 92–95 (DMPG), 159–162 (TKAD), and 193–195 (TSS). Residues Ser-52 and Thr-74 each coordinate Mg(2+).

This sequence belongs to the TRAFAC class TrmE-Era-EngA-EngB-Septin-like GTPase superfamily. EngB GTPase family. It depends on Mg(2+) as a cofactor.

Functionally, necessary for normal cell division and for the maintenance of normal septation. The chain is Probable GTP-binding protein EngB from Rhodopseudomonas palustris (strain BisA53).